A 445-amino-acid polypeptide reads, in one-letter code: 6-phosphogluconate dehydrogenase, decarboxylating (445 aa).

NADP(+)-binding positions include 1 to 4, 22 to 24, 63 to 65, and Asn-91; these read AVMG, NRS, and VKA. Substrate is bound by residues Asn-91 and 117–119; that span reads SGG. The Proton acceptor role is filled by Lys-172. A substrate-binding site is contributed by 175-176; it reads HN. Glu-179 serves as the catalytic Proton donor. Substrate is bound by residues Tyr-180, Lys-249, Arg-276, Arg-434, and His-440.

It belongs to the 6-phosphogluconate dehydrogenase family. Homodimer.

The catalysed reaction is 6-phospho-D-gluconate + NADP(+) = D-ribulose 5-phosphate + CO2 + NADPH. Its pathway is carbohydrate degradation; pentose phosphate pathway; D-ribulose 5-phosphate from D-glucose 6-phosphate (oxidative stage): step 3/3. Functionally, catalyzes the oxidative decarboxylation of 6-phosphogluconate to ribulose 5-phosphate and CO(2), with concomitant reduction of NADP to NADPH. The sequence is that of 6-phosphogluconate dehydrogenase, decarboxylating (gnd) from Raoultella planticola (Klebsiella planticola).